Reading from the N-terminus, the 226-residue chain is MRTLLVDTDLTRAVRGALGDGGFAVDVVGTLEQASSAFFSASYEILLLELVLPDGDGLDWLRQLRSDGYSVPAVIMSRLDDLEKRISVFNSGADDFLRKPVSTDELIARMRALLRRSTQITCPIIEFGNLHFDPIGRQVSVDGHPLMIARRELCILEHLLNRAGRIVPRARLEDQLYSFNDEVSGNALEAGIYRLRGYLSRSGATLRIRTVRGIGYTLELTDASSA.

The Response regulatory domain maps to 1–114 (MRTLLVDTDL…ELIARMRALL (114 aa)). A DNA-binding region (ompR/PhoB-type) is located at residues 122–220 (CPIIEFGNLH…VRGIGYTLEL (99 aa)).

The protein resides in the cytoplasm. This is Probable transcriptional regulatory protein y4xI from Sinorhizobium fredii (strain NBRC 101917 / NGR234).